A 434-amino-acid polypeptide reads, in one-letter code: Mannose-6-phosphate isomerase (434 aa).

The Zn(2+) site is built by glutamine 109, histidine 111, and glutamate 136. The span at serine 181–aspartate 191 shows a compositional bias: polar residues. The segment at serine 181–serine 200 is disordered. Zn(2+) is bound at residue histidine 291. Residue arginine 310 is part of the active site.

The protein belongs to the mannose-6-phosphate isomerase type 1 family. Requires Zn(2+) as cofactor.

The protein localises to the cytoplasm. The catalysed reaction is D-mannose 6-phosphate = D-fructose 6-phosphate. Its pathway is nucleotide-sugar biosynthesis; GDP-alpha-D-mannose biosynthesis; alpha-D-mannose 1-phosphate from D-fructose 6-phosphate: step 1/2. In terms of biological role, involved in the synthesis of the GDP-mannose and dolichol-phosphate-mannose required for a number of critical mannosyl transfer reactions. The protein is Mannose-6-phosphate isomerase (MAN1) of Cryptococcus neoformans var. neoformans serotype D (strain JEC21 / ATCC MYA-565) (Filobasidiella neoformans).